The chain runs to 214 residues: Probable nicotinate-nucleotide adenylyltransferase (214 aa).

It belongs to the NadD family.

It catalyses the reaction nicotinate beta-D-ribonucleotide + ATP + H(+) = deamido-NAD(+) + diphosphate. It participates in cofactor biosynthesis; NAD(+) biosynthesis; deamido-NAD(+) from nicotinate D-ribonucleotide: step 1/1. Its function is as follows. Catalyzes the reversible adenylation of nicotinate mononucleotide (NaMN) to nicotinic acid adenine dinucleotide (NaAD). This is Probable nicotinate-nucleotide adenylyltransferase from Buchnera aphidicola subsp. Acyrthosiphon pisum (strain Tuc7).